The following is a 424-amino-acid chain: Arginine biosynthesis bifunctional protein ArgJ (424 aa).

Substrate-binding residues include Thr-172, Lys-198, Thr-209, Glu-296, Asn-419, and Ser-424. Thr-209 functions as the Nucleophile in the catalytic mechanism.

It belongs to the ArgJ family. Heterotetramer of two alpha and two beta chains.

It localises to the cytoplasm. It carries out the reaction N(2)-acetyl-L-ornithine + L-glutamate = N-acetyl-L-glutamate + L-ornithine. It catalyses the reaction L-glutamate + acetyl-CoA = N-acetyl-L-glutamate + CoA + H(+). The protein operates within amino-acid biosynthesis; L-arginine biosynthesis; L-ornithine and N-acetyl-L-glutamate from L-glutamate and N(2)-acetyl-L-ornithine (cyclic): step 1/1. Its pathway is amino-acid biosynthesis; L-arginine biosynthesis; N(2)-acetyl-L-ornithine from L-glutamate: step 1/4. Functionally, catalyzes two activities which are involved in the cyclic version of arginine biosynthesis: the synthesis of N-acetylglutamate from glutamate and acetyl-CoA as the acetyl donor, and of ornithine by transacetylation between N(2)-acetylornithine and glutamate. This chain is Arginine biosynthesis bifunctional protein ArgJ, found in Gluconobacter oxydans (strain 621H) (Gluconobacter suboxydans).